Reading from the N-terminus, the 326-residue chain is ATP synthase gamma chain (326 aa).

The protein belongs to the ATPase gamma chain family. In terms of assembly, F-type ATPases have 2 components, CF(1) - the catalytic core - and CF(0) - the membrane proton channel. CF(1) has five subunits: alpha(3), beta(3), gamma(1), delta(1), epsilon(1). CF(0) has three main subunits: a, b and c.

The protein resides in the cell membrane. In terms of biological role, produces ATP from ADP in the presence of a proton gradient across the membrane. The gamma chain is believed to be important in regulating ATPase activity and the flow of protons through the CF(0) complex. This is ATP synthase gamma chain from Rhodococcus jostii (strain RHA1).